The primary structure comprises 400 residues: Deoxyguanosinetriphosphate triphosphohydrolase-like protein (400 aa).

In terms of domain architecture, HD spans 76–204; that stretch reads RLTHTLEVAQ…VNIADPLAYC (129 aa).

It belongs to the dGTPase family. Type 2 subfamily.

The sequence is that of Deoxyguanosinetriphosphate triphosphohydrolase-like protein from Syntrophus aciditrophicus (strain SB).